The primary structure comprises 39 residues: MLALKISVYSVVFFFIGIFMFGFLASDPSRTPSRKDLEE.

The chain crosses the membrane as a helical span at residues 6–26 (ISVYSVVFFFIGIFMFGFLAS).

The protein belongs to the PsbI family. PSII is composed of 1 copy each of membrane proteins PsbA, PsbB, PsbC, PsbD, PsbE, PsbF, PsbH, PsbI, PsbJ, PsbK, PsbL, PsbM, PsbT, PsbX, PsbY, PsbZ, Psb30/Ycf12, peripheral proteins PsbO, CyanoQ (PsbQ), PsbU, PsbV and a large number of cofactors. It forms dimeric complexes.

It localises to the cellular thylakoid membrane. Its function is as follows. One of the components of the core complex of photosystem II (PSII), required for its stability and/or assembly. PSII is a light-driven water:plastoquinone oxidoreductase that uses light energy to abstract electrons from H(2)O, generating O(2) and a proton gradient subsequently used for ATP formation. It consists of a core antenna complex that captures photons, and an electron transfer chain that converts photonic excitation into a charge separation. The protein is Photosystem II reaction center protein I of Synechococcus sp. (strain RCC307).